We begin with the raw amino-acid sequence, 1234 residues long: Formin-like protein 3 (1234 aa).

The region spanning 1–208 (MRLDSFPASI…QYVARRNISP (208 aa)) is the Phosphatase tensin-type domain. Cys141 acts as the Phosphocysteine intermediate in catalysis. The region spanning 214–352 (ERALSFDCLI…FRAEMLFCEL (139 aa)) is the C2 tensin-type domain. Disordered stretches follow at residues 443–478 (DSDEEKYSVASDSVSSSEHEKVQPGGNSSDSENINH) and 492–840 (LVNT…LKPL). The span at 498 to 507 (VLPPTTPPPC) shows a compositional bias: pro residues. The span at 524-534 (VQHESPSDRKL) shows a compositional bias: basic and acidic residues. 7 stretches are compositionally biased toward pro residues: residues 536–576 (SPSP…PPLP), 584–656 (QPPP…PPAP), 663–673 (PAPPPPPPPPR), 688–699 (GPPPPPPPPLPP), 709–721 (PSAPPPPPPPPPA), 729–739 (APAPPLPPPLP), and 762–784 (PAPPPPPPQAPKPPGTVPPPPPL). The region spanning 827–1226 (QQSNPPKKAS…KLEKDKEKAT (400 aa)) is the FH2 domain.

Belongs to the formin-like family. Class-II subfamily.

The chain is Formin-like protein 3 (FH3) from Oryza sativa subsp. japonica (Rice).